Consider the following 105-residue polypeptide: MAKEAPAKTGLAVGLNKGHKTTARVVKPRVSRTKGHLSKRTAFVREVVKEVAGLAPYERRVIELLRNSKDKRARKLAKKRLGTFGRAKRKVDELQRVIAESRRAH.

Residues M1–K20 form a disordered region.

This sequence belongs to the eukaryotic ribosomal protein eL36 family.

This chain is Large ribosomal subunit protein eL36 (rpl36), found in Trichoderma hamatum.